We begin with the raw amino-acid sequence, 478 residues long: Lysosome membrane protein 2 (478 aa).

The Cytoplasmic segment spans residues 1–4; it reads MGRC. A helical transmembrane segment spans residues 5-27; it reads CFYTAGTLSLLLLVTSVTLLVAR. At 28–433 the chain is on the lumenal side; it reads VFQKAVDQSI…RLKSMINTTL (406 aa). 3 N-linked (GlcNAc...) asparagine glycosylation sites follow: asparagine 45, asparagine 68, and asparagine 105. Residues 155–191 are important for interaction with GBA1; that stretch reads IIEAMLKAYQQKLFVTHTVDELLWGYKDEILSLIHVF. Residues asparagine 206, asparagine 224, asparagine 249, and asparagine 304 are each glycosylated (N-linked (GlcNAc...) asparagine). 2 disulfide bridges follow: cysteine 274/cysteine 329 and cysteine 312/cysteine 318. Residues asparagine 325, asparagine 412, and asparagine 430 are each glycosylated (N-linked (GlcNAc...) asparagine). The chain crosses the membrane as a helical span at residues 434-459; it reads IITNIPYIIMALGVFFGLVFTWLACK. Residues 460–478 are Cytoplasmic-facing; sequence GQGSMDEGTADERAPLIRT.

Belongs to the CD36 family. As to quaternary structure, interacts with GBA1. In terms of assembly, (Microbial infection) Interacts with enterovirus 71 capsid proteins VP1 and VP2.

Its subcellular location is the lysosome membrane. Its function is as follows. Acts as a lysosomal receptor for glucosylceramidase (GBA1) targeting. In terms of biological role, (Microbial infection) Acts as a receptor for enterovirus 71. In Homo sapiens (Human), this protein is Lysosome membrane protein 2 (SCARB2).